The primary structure comprises 298 residues: Probable alpha-L-glutamate ligase (298 aa).

The ATP-grasp domain maps to 104 to 287 (MQLLSRHGIG…VAGKIIEFLE (184 aa)). ATP-binding positions include K141, 178–179 (EY), D187, and 211–213 (RSN). Residues D248, E260, and N262 each coordinate Mg(2+). Positions 248, 260, and 262 each coordinate Mn(2+).

Belongs to the RimK family. The cofactor is Mg(2+). Mn(2+) serves as cofactor.

The protein is Probable alpha-L-glutamate ligase of Aeromonas salmonicida (strain A449).